A 199-amino-acid chain; its full sequence is Imidazoleglycerol-phosphate dehydratase (199 aa).

Belongs to the imidazoleglycerol-phosphate dehydratase family.

The protein resides in the cytoplasm. The catalysed reaction is D-erythro-1-(imidazol-4-yl)glycerol 3-phosphate = 3-(imidazol-4-yl)-2-oxopropyl phosphate + H2O. Its pathway is amino-acid biosynthesis; L-histidine biosynthesis; L-histidine from 5-phospho-alpha-D-ribose 1-diphosphate: step 6/9. This Paramagnetospirillum magneticum (strain ATCC 700264 / AMB-1) (Magnetospirillum magneticum) protein is Imidazoleglycerol-phosphate dehydratase.